A 350-amino-acid polypeptide reads, in one-letter code: tRNA-splicing endonuclease (350 aa).

Catalysis depends on residues Y286, H297, and K328.

It belongs to the tRNA-intron endonuclease family. Archaeal long subfamily. As to quaternary structure, homodimer.

It catalyses the reaction pretRNA = a 3'-half-tRNA molecule with a 5'-OH end + a 5'-half-tRNA molecule with a 2',3'-cyclic phosphate end + an intron with a 2',3'-cyclic phosphate and a 5'-hydroxyl terminus.. Its function is as follows. Endonuclease that removes tRNA introns. Cleaves pre-tRNA at the 5'- and 3'-splice sites to release the intron. The products are an intron and two tRNA half-molecules bearing 2',3' cyclic phosphate and 5'-OH termini. Recognizes a pseudosymmetric substrate in which 2 bulged loops of 3 bases are separated by a stem of 4 bp. The protein is tRNA-splicing endonuclease of Methanosarcina barkeri (strain Fusaro / DSM 804).